We begin with the raw amino-acid sequence, 304 residues long: Ribosomal RNA small subunit methyltransferase H (304 aa).

S-adenosyl-L-methionine contacts are provided by residues 36–38 (CGH), D55, F81, D102, and Q109.

This sequence belongs to the methyltransferase superfamily. RsmH family.

The protein resides in the cytoplasm. The catalysed reaction is cytidine(1402) in 16S rRNA + S-adenosyl-L-methionine = N(4)-methylcytidine(1402) in 16S rRNA + S-adenosyl-L-homocysteine + H(+). Its function is as follows. Specifically methylates the N4 position of cytidine in position 1402 (C1402) of 16S rRNA. The sequence is that of Ribosomal RNA small subunit methyltransferase H from Onion yellows phytoplasma (strain OY-M).